Here is a 238-residue protein sequence, read N- to C-terminus: Phosphoribosylaminoimidazole-succinocarboxamide synthase (238 aa).

The protein belongs to the SAICAR synthetase family.

It carries out the reaction 5-amino-1-(5-phospho-D-ribosyl)imidazole-4-carboxylate + L-aspartate + ATP = (2S)-2-[5-amino-1-(5-phospho-beta-D-ribosyl)imidazole-4-carboxamido]succinate + ADP + phosphate + 2 H(+). Its pathway is purine metabolism; IMP biosynthesis via de novo pathway; 5-amino-1-(5-phospho-D-ribosyl)imidazole-4-carboxamide from 5-amino-1-(5-phospho-D-ribosyl)imidazole-4-carboxylate: step 1/2. The protein is Phosphoribosylaminoimidazole-succinocarboxamide synthase of Methanococcoides burtonii (strain DSM 6242 / NBRC 107633 / OCM 468 / ACE-M).